We begin with the raw amino-acid sequence, 466 residues long: 3-isopropylmalate dehydratase large subunit (466 aa).

3 residues coordinate [4Fe-4S] cluster: C347, C407, and C410.

It belongs to the aconitase/IPM isomerase family. LeuC type 1 subfamily. In terms of assembly, heterodimer of LeuC and LeuD. The cofactor is [4Fe-4S] cluster.

The enzyme catalyses (2R,3S)-3-isopropylmalate = (2S)-2-isopropylmalate. The protein operates within amino-acid biosynthesis; L-leucine biosynthesis; L-leucine from 3-methyl-2-oxobutanoate: step 2/4. Its function is as follows. Catalyzes the isomerization between 2-isopropylmalate and 3-isopropylmalate, via the formation of 2-isopropylmaleate. This chain is 3-isopropylmalate dehydratase large subunit, found in Shigella flexneri.